Consider the following 293-residue polypeptide: Mimecan (293 aa).

The first 19 residues, Met1 to Pro19, serve as a signal peptide directing secretion. Asn60 carries N-linked (GlcNAc...) asparagine glycosylation. 7 LRR repeats span residues Glu107–Ile126, Lys127–Ile150, Glu151–Leu174, Val175–Ile194, Lys195–Leu220, Glu221–Ile241, and Thr242–Ile272. N-linked (GlcNAc...) asparagine glycosylation is found at Asn240 and Asn253. A disulfide bond links Cys250 and Cys283.

This sequence belongs to the small leucine-rich proteoglycan (SLRP) family. SLRP class III subfamily. Contains keratan sulfate. In terms of tissue distribution, expressed in many tissues.

It is found in the secreted. The protein localises to the extracellular space. Its subcellular location is the extracellular matrix. In terms of biological role, induces bone formation in conjunction with TGF-beta-1 or TGF-beta-2. In Coturnix japonica (Japanese quail), this protein is Mimecan (OGN).